We begin with the raw amino-acid sequence, 155 residues long: Endoribonuclease YbeY (155 aa).

Residues His117, His121, and His127 each contribute to the Zn(2+) site.

The protein belongs to the endoribonuclease YbeY family. Requires Zn(2+) as cofactor.

The protein resides in the cytoplasm. In terms of biological role, single strand-specific metallo-endoribonuclease involved in late-stage 70S ribosome quality control and in maturation of the 3' terminus of the 16S rRNA. This Psychrobacter cryohalolentis (strain ATCC BAA-1226 / DSM 17306 / VKM B-2378 / K5) protein is Endoribonuclease YbeY.